A 213-amino-acid chain; its full sequence is Large ribosomal subunit protein uL3 (213 aa).

The disordered stretch occupies residues G131–D168.

The protein belongs to the universal ribosomal protein uL3 family. Part of the 50S ribosomal subunit. Forms a cluster with proteins L14 and L19.

Functionally, one of the primary rRNA binding proteins, it binds directly near the 3'-end of the 23S rRNA, where it nucleates assembly of the 50S subunit. This Synechococcus elongatus (strain ATCC 33912 / PCC 7942 / FACHB-805) (Anacystis nidulans R2) protein is Large ribosomal subunit protein uL3.